The primary structure comprises 259 residues: Undecaprenyl-diphosphatase 4 (259 aa).

Helical transmembrane passes span 1–21 (MNWL…FLPI), 39–59 (AGLF…FIYY), 71–91 (FSKL…IGLL), 99–119 (ISKT…FLYV), 133–153 (ITYK…FPAI), 173–193 (AAYF…ILQF), 208–228 (SLIV…SWMI), and 239–259 (FAYY…TDVF).

It belongs to the UppP family.

Its subcellular location is the cell membrane. The enzyme catalyses di-trans,octa-cis-undecaprenyl diphosphate + H2O = di-trans,octa-cis-undecaprenyl phosphate + phosphate + H(+). In terms of biological role, catalyzes the dephosphorylation of undecaprenyl diphosphate (UPP). Confers resistance to bacitracin. This is Undecaprenyl-diphosphatase 4 from Bacillus thuringiensis subsp. konkukian (strain 97-27).